The primary structure comprises 174 residues: Ribosome maturation factor RimM (174 aa).

Residues 97–169 (PDTYYDHQLE…ILEIDPPDGL (73 aa)) form the PRC barrel domain.

Belongs to the RimM family. Binds ribosomal protein uS19.

It is found in the cytoplasm. In terms of biological role, an accessory protein needed during the final step in the assembly of 30S ribosomal subunit, possibly for assembly of the head region. Essential for efficient processing of 16S rRNA. May be needed both before and after RbfA during the maturation of 16S rRNA. It has affinity for free ribosomal 30S subunits but not for 70S ribosomes. The sequence is that of Ribosome maturation factor RimM from Mycobacterium ulcerans (strain Agy99).